Here is a 197-residue protein sequence, read N- to C-terminus: Dephospho-CoA kinase (197 aa).

The region spanning 2 to 197 (IIGLTGGIAS…GAIKDLANLV (196 aa)) is the DPCK domain. 10-15 (ASGKST) contributes to the ATP binding site.

Belongs to the CoaE family.

It is found in the cytoplasm. It catalyses the reaction 3'-dephospho-CoA + ATP = ADP + CoA + H(+). Its pathway is cofactor biosynthesis; coenzyme A biosynthesis; CoA from (R)-pantothenate: step 5/5. In terms of biological role, catalyzes the phosphorylation of the 3'-hydroxyl group of dephosphocoenzyme A to form coenzyme A. The polypeptide is Dephospho-CoA kinase (Streptococcus thermophilus (strain CNRZ 1066)).